A 370-amino-acid chain; its full sequence is Muconate cycloisomerase 1 (370 aa).

The active site involves K166. Residues D195, E221, and D246 each contribute to the Mn(2+) site.

Belongs to the mandelate racemase/muconate lactonizing enzyme family. Homooctamer. The cofactor is Mn(2+).

The enzyme catalyses (S)-muconolactone = cis,cis-muconate + H(+). It functions in the pathway aromatic compound metabolism; beta-ketoadipate pathway; 5-oxo-4,5-dihydro-2-furylacetate from catechol: step 2/3. In terms of biological role, catalyzes a syn cycloisomerization. In Acinetobacter baylyi (strain ATCC 33305 / BD413 / ADP1), this protein is Muconate cycloisomerase 1 (catB).